A 1210-amino-acid polypeptide reads, in one-letter code: Multimerin-1 (1210 aa).

Residues 1–19 (MLGLKFLVLLSILWGRVFR) form the signal peptide. Residues 57-102 (ATQNPSTQGPAAAERSSEDDVLLQSTSQPSETSTPPEGRHQTPLEK) form a disordered region. Positions 80 to 92 (QSTSQPSETSTPP) are enriched in low complexity. N-linked (GlcNAc...) asparagine glycosylation is present at Asn133. The segment covering 143–155 (SRKSDQQEVSTKS) has biased composition (polar residues). The segment at 143-190 (SRKSDQQEVSTKSAGDMGNRSARETHLRRSDNSRNQRPSYQKPSFETT) is disordered. Residue Asn161 is glycosylated (N-linked (GlcNAc...) asparagine). A compositionally biased stretch (basic and acidic residues) spans 163–176 (SARETHLRRSDNSR). A compositionally biased stretch (polar residues) spans 177-189 (NQRPSYQKPSFET). An EMI domain is found at 192–267 (GKNWCAHVHT…PGYIGPNCQL (76 aa)). 3 cysteine pairs are disulfide-bonded: Cys196–Cys257, Cys222–Cys230, and Cys256–Cys265. Thr201 carries an O-linked (Fuc) threonine glycan. A glycan (O-linked (Fuc) threonine) is linked at Thr250. The tract at residues 276–299 (AHSNQAESHTAVDQGRAQQQKQDC) is disordered. Positions 303–338 (AMIQKLAEQLSQQERKLSLLQKKVDNASLVADDMRN) form a coiled coil. 14 N-linked (GlcNAc...) asparagine glycosylation sites follow: Asn328, Asn415, Asn491, Asn525, Asn560, Asn602, Asn712, Asn765, Asn810, Asn822, Asn903, Asn915, Asn963, and Asn1000. Positions 564–690 (LLEMEKESAR…RHNLLRNEVQ (127 aa)) form a coiled coil. Positions 809–846 (FNETTSQVNKCQQNMSHLEENMLSVTKTAKEFETRLQG) form a coiled coil. An EGF-like domain is found at 1023-1059 (EHSSCSSFPCQNGGTCISGRSNFICACRHPFMGDTCT). 3 disulfide bridges follow: Cys1027/Cys1038, Cys1032/Cys1047, and Cys1049/Cys1058. Thr1037 carries an O-linked (Fuc) threonine glycan. One can recognise a C1q domain in the interval 1078–1210 (RYAPMVAFFV…TFSGYLLYRT (133 aa)).

In terms of assembly, multimeric. Composed of varying sized, disulfide-linked multimers, the smallest of which is a homotrimer. Proteolysis of the promultimerin in the N-terminal region, leads to the mature p155 form that is stored in platelets. Interacts with factor V/Va. Extensively N-glycosylated. In terms of processing, O-fucosylated within the EMI domain (at Thr-201 and Thr-250) by FUT10/POFUT3 and FUT11/POFUT4. O-fucosylation at Thr-201 and Thr-1037 are required for facilitating protein folding and secretion.

The protein localises to the secreted. Functionally, carrier protein for platelet (but not plasma) factor V/Va. Plays a role in the storage and stabilization of factor V in platelets. Upon release following platelet activation, may limit platelet and plasma factor Va-dependent thrombin generation. Ligand for integrin alpha-IIb/beta-3 and integrin alpha-V/beta-3 on activated platelets, and may function as an extracellular matrix or adhesive protein. This is Multimerin-1 from Mus musculus (Mouse).